The chain runs to 402 residues: Sorting nexin 1 (402 aa).

Over residues methionine 1–isoleucine 10 the composition is skewed to polar residues. The tract at residues methionine 1 to tyrosine 25 is disordered. Low complexity predominate over residues serine 11–proline 24. Serine 16 is subject to Phosphoserine. The region spanning proline 24–methionine 143 is the PX domain. 3 residues coordinate a 1,2-diacyl-sn-glycero-3-phospho-(1D-myo-inositol-3-phosphate): arginine 67, lysine 93, and arginine 109. A BAR domain is found at leucine 160 to valine 402.

The protein belongs to the sorting nexin family. Homodimer. Heterodimer with SNX2A or SNX2B. Component of the retromer complex which consists of VPS29 (MAG1), VPS26 (VPS26A or VPS26B), VPS35 (VPS35A or VPS35B or VPS35C), VPS5/17 (SNX1 or SNX2A or SNX2B). Interacts with BLOS1 and BLOS2. As to expression, ubiquitously expressed.

Its subcellular location is the cytoplasm. The protein resides in the endosome membrane. It is found in the prevacuolar compartment membrane. It localises to the golgi apparatus. The protein localises to the trans-Golgi network membrane. Plays a role in vesicular protein sorting. Acts at the crossroads between the secretory and endocytic pathways. Is involved in the endosome to vacuole protein transport via its interaction with the BLOS1/2 proteins and, as component of the membrane-associated retromer complex, is also involved in endosome-to-Golgi retrograde transport. Required for the auxin-carrier protein PIN2 sorting to the lytic vacuolar pathway and the trafficking of several plasma membrane proteins. Also involved in the efficient sorting of seed storage protein globulin 12S. This Arabidopsis thaliana (Mouse-ear cress) protein is Sorting nexin 1 (SNX1).